The primary structure comprises 590 residues: Laccase-19 (590 aa).

The N-terminal stretch at 1-28 (MEKLSMVTSLLCAITVAVLAVAVVSGEA) is a signal peptide. Plastocyanin-like domains lie at 36–152 (VVHE…PRDG) and 161–315 (KDVP…YAGT). Asparagine 41 and asparagine 47 each carry an N-linked (GlcNAc...) asparagine glycan. Cu cation-binding residues include histidine 86 and histidine 88. N-linked (GlcNAc...) asparagine glycosylation is present at asparagine 120. Cu cation-binding residues include histidine 131 and histidine 133. Residues asparagine 205, asparagine 344, asparagine 378, asparagine 397, asparagine 434, and asparagine 465 are each glycosylated (N-linked (GlcNAc...) asparagine). One can recognise a Plastocyanin-like 3 domain in the interval 424 to 566 (DFPIRPPRPF…ATAFIVEDGP (143 aa)). Positions 483, 486, 488, 545, 546, 547, 551, and 556 each coordinate Cu cation. Residues 565 to 590 (GPTPETSLPPPPPEFKRCGNNGLSQP) form a disordered region.

It belongs to the multicopper oxidase family. Requires Cu cation as cofactor.

It localises to the secreted. It is found in the extracellular space. Its subcellular location is the apoplast. The catalysed reaction is 4 hydroquinone + O2 = 4 benzosemiquinone + 2 H2O. In terms of biological role, lignin degradation and detoxification of lignin-derived products. The chain is Laccase-19 (LAC19) from Oryza sativa subsp. japonica (Rice).